The following is a 72-amino-acid chain: uncharacterized protein (72 aa).

A compositionally biased stretch (low complexity) spans 1-38 (MSIFSSLSSLSTGSLKSSVSSIENGSSSGSFGSNETSG). Residues 1 to 42 (MSIFSSLSSLSTGSLKSSVSSIENGSSSGSFGSNETSGWGQH) form a disordered region.

This is an uncharacterized protein from Dictyostelium discoideum (Social amoeba).